Reading from the N-terminus, the 122-residue chain is Protein MGF 100-1R (122 aa).

The protein belongs to the asfivirus MGF 100 family.

Functionally, plays a role in virus cell tropism, and may be required for efficient virus replication in macrophages. The chain is Protein MGF 100-1R from Ornithodoros (relapsing fever ticks).